The sequence spans 382 residues: Putative acetyl-CoA C-acetyltransferase VraB (382 aa).

Residue Cys-86 is the Acyl-thioester intermediate of the active site. His-338 serves as the catalytic Proton acceptor.

Belongs to the thiolase-like superfamily. Thiolase family.

This is Putative acetyl-CoA C-acetyltransferase VraB (vraB) from Staphylococcus epidermidis (strain ATCC 35984 / DSM 28319 / BCRC 17069 / CCUG 31568 / BM 3577 / RP62A).